Reading from the N-terminus, the 79-residue chain is D-alanyl carrier protein (79 aa).

The 77-residue stretch at 1–77 folds into the Carrier domain; sequence MTVEEKIIDA…KIVEGVKELQ (77 aa). Position 35 is an O-(pantetheine 4'-phosphoryl)serine (S35).

It belongs to the DltC family. Post-translationally, 4'-phosphopantetheine is transferred from CoA to a specific serine of apo-DCP.

It is found in the cytoplasm. It participates in cell wall biogenesis; lipoteichoic acid biosynthesis. In terms of biological role, carrier protein involved in the D-alanylation of lipoteichoic acid (LTA). The loading of thioester-linked D-alanine onto DltC is catalyzed by D-alanine--D-alanyl carrier protein ligase DltA. The DltC-carried D-alanyl group is further transferred to cell membrane phosphatidylglycerol (PG) by forming an ester bond, probably catalyzed by DltD. D-alanylation of LTA plays an important role in modulating the properties of the cell wall in Gram-positive bacteria, influencing the net charge of the cell wall. This chain is D-alanyl carrier protein, found in Streptococcus uberis (strain ATCC BAA-854 / 0140J).